A 294-amino-acid polypeptide reads, in one-letter code: MDAKKPSWLRVNVPGGERYQKVRETLKGLQLHTVCAEAHCPNVAECWGGGTATVMLMGDVCTRGCRFCNVKTAAHPPALDPDEPRHLAAAIAELGLDYIVVTSVDRDDLPDGGAAHFADAIRRLKEIPGLLVEVLTPDFRGDPAAVRTVGRAAPDVFANNLETVRRLTPAVRDAKATYDQTLGVLAQMKREFPQVVTKSSIMVGLGEQEAEVVEAMRDLRANGVEILTLGQYLRPSAWHLPVVEYVSPERFAAYRDQGLALGFRYVASGPLVRSSYRAAELFLRGEIESRTKPR.

[4Fe-4S] cluster-binding residues include C35, C40, C46, C61, C65, C68, and S275. Residues 46 to 264 form the Radical SAM core domain; the sequence is CWGGGTATVM…RDQGLALGFR (219 aa).

This sequence belongs to the radical SAM superfamily. Lipoyl synthase family. The cofactor is [4Fe-4S] cluster.

The protein resides in the cytoplasm. The catalysed reaction is [[Fe-S] cluster scaffold protein carrying a second [4Fe-4S](2+) cluster] + N(6)-octanoyl-L-lysyl-[protein] + 2 oxidized [2Fe-2S]-[ferredoxin] + 2 S-adenosyl-L-methionine + 4 H(+) = [[Fe-S] cluster scaffold protein] + N(6)-[(R)-dihydrolipoyl]-L-lysyl-[protein] + 4 Fe(3+) + 2 hydrogen sulfide + 2 5'-deoxyadenosine + 2 L-methionine + 2 reduced [2Fe-2S]-[ferredoxin]. The protein operates within protein modification; protein lipoylation via endogenous pathway; protein N(6)-(lipoyl)lysine from octanoyl-[acyl-carrier-protein]: step 2/2. Functionally, catalyzes the radical-mediated insertion of two sulfur atoms into the C-6 and C-8 positions of the octanoyl moiety bound to the lipoyl domains of lipoate-dependent enzymes, thereby converting the octanoylated domains into lipoylated derivatives. The protein is Lipoyl synthase of Anaeromyxobacter dehalogenans (strain 2CP-C).